We begin with the raw amino-acid sequence, 423 residues long: Large ribosomal subunit protein mL37 (423 aa).

A mitochondrion-targeting transit peptide spans 1–29 (MALASGPAMRALAGSARLGLGGYGAPKRG).

Belongs to the mitochondrion-specific ribosomal protein mL37 family. In terms of assembly, component of the mitochondrial ribosome large subunit (39S) which comprises a 16S rRNA and about 50 distinct proteins.

The protein resides in the mitochondrion. The chain is Large ribosomal subunit protein mL37 (Mrpl37) from Rattus norvegicus (Rat).